The sequence spans 309 residues: Elongation factor Ts (309 aa).

The segment at 82-85 (TDFV) is involved in Mg(2+) ion dislocation from EF-Tu.

Belongs to the EF-Ts family.

The protein resides in the cytoplasm. Its function is as follows. Associates with the EF-Tu.GDP complex and induces the exchange of GDP to GTP. It remains bound to the aminoacyl-tRNA.EF-Tu.GTP complex up to the GTP hydrolysis stage on the ribosome. The protein is Elongation factor Ts of Rickettsia typhi (strain ATCC VR-144 / Wilmington).